The sequence spans 228 residues: UPF0173 metal-dependent hydrolase LMHCC_0991 (228 aa).

The protein belongs to the UPF0173 family.

In Listeria monocytogenes serotype 4a (strain HCC23), this protein is UPF0173 metal-dependent hydrolase LMHCC_0991.